The following is a 365-amino-acid chain: MMKKNLMLIFGGVSFEHEISLRSACGIYSALMKLDKYNVFSSFIDKITGVWYLLDSVPDDPKLIKKDSSAIISLIPGYGIFVNNKDLKIDVVFPIVHGRTGEDGAIQGFLKIMDIPCVGSGILGSAISINKYFCKLLLKSFNIPLVPFIGFKKYDYLLDKEGIKKDIKQSLDYPVIVKPAMLGSSIGISIAYNETQIEKCIEEAFAYDLTVVIEKFMRAREIECAVIGNEQIKIFTPGEIVIQDFVFYDYDAKYSTAPGNSVVFNIPAHLDTKHLLDIKEYAFFTYKCLELRGMARIDFLIEKDTDLVYINEINTIPGFTDISMFSKMCEHDGLDYGSLVDKLIALAFQSYAKRKERIDFHRLEN.

One can recognise an ATP-grasp domain in the interval 135–345; sequence KLLLKSFNIP…YGSLVDKLIA (211 aa). 168–223 is a binding site for ATP; that stretch reads KQSLDYPVIVKPAMLGSSIGISIAYNETQIEKCIEEAFAYDLTVVIEKFMRAREIE. Asp-298, Glu-312, and Asn-314 together coordinate Mg(2+).

This sequence belongs to the D-alanine--D-alanine ligase family. Mg(2+) is required as a cofactor. It depends on Mn(2+) as a cofactor.

The protein resides in the cytoplasm. It catalyses the reaction 2 D-alanine + ATP = D-alanyl-D-alanine + ADP + phosphate + H(+). It participates in cell wall biogenesis; peptidoglycan biosynthesis. In terms of biological role, cell wall formation. This chain is D-alanine--D-alanine ligase, found in Borrelia turicatae (strain 91E135).